A 155-amino-acid polypeptide reads, in one-letter code: SsrA-binding protein (155 aa).

The span at 127–149 (KKDYDKRNDMRKKEAKREMERTF) shows a compositional bias: basic and acidic residues. Positions 127–155 (KKDYDKRNDMRKKEAKREMERTFKSKNQY) are disordered.

The protein belongs to the SmpB family.

Its subcellular location is the cytoplasm. Functionally, required for rescue of stalled ribosomes mediated by trans-translation. Binds to transfer-messenger RNA (tmRNA), required for stable association of tmRNA with ribosomes. tmRNA and SmpB together mimic tRNA shape, replacing the anticodon stem-loop with SmpB. tmRNA is encoded by the ssrA gene; the 2 termini fold to resemble tRNA(Ala) and it encodes a 'tag peptide', a short internal open reading frame. During trans-translation Ala-aminoacylated tmRNA acts like a tRNA, entering the A-site of stalled ribosomes, displacing the stalled mRNA. The ribosome then switches to translate the ORF on the tmRNA; the nascent peptide is terminated with the 'tag peptide' encoded by the tmRNA and targeted for degradation. The ribosome is freed to recommence translation, which seems to be the essential function of trans-translation. The protein is SsrA-binding protein of Lysinibacillus sphaericus (strain C3-41).